The chain runs to 240 residues: GATA transcription factor 4 (240 aa).

A disordered region spans residues 104–124 (ISFTGKPRSRRSRAPAPSVAG). Residues 109–116 (KPRSRRSR) carry the Nuclear localization signal motif. The GATA-type zinc-finger motif lies at 154-208 (ADGARRCTHCASEKTPQWRTGPLGPKTLCNACGVRYKSGRLVPEYRPASSPTFVL).

Belongs to the type IV zinc-finger family. Class A subfamily. Expressed in roots, flowers and leaves, and to a lower extent in stems.

The protein localises to the nucleus. Functionally, transcriptional activator that specifically binds 5'-GATA-3' or 5'-GAT-3' motifs within gene promoters. May be involved in the regulation of some light-responsive genes. The chain is GATA transcription factor 4 (GATA4) from Arabidopsis thaliana (Mouse-ear cress).